Consider the following 615-residue polypeptide: Sorting nexin-41 (615 aa).

Residues 1–71 form a disordered region; it reads MWNDEDNNPY…DEGDYVGQAN (71 aa). Over residues 42-53 the composition is skewed to low complexity; the sequence is SHSSNPDISDFS. A PX domain is found at 93–210; it reads PDMPILITDA…RFLDPNVSWS (118 aa). A 1,2-diacyl-sn-glycero-3-phospho-(1D-myo-inositol-3-phosphate) is bound by residues Arg127, Ser129, Lys153, and Arg176. 2 disordered regions span residues 218 to 277 and 432 to 504; these read ASSV…RFPP and QYLN…RKTS. 2 stretches are compositionally biased toward polar residues: residues 252 to 263 and 434 to 446; these read LKSTSGTSSSPN and LNRTSPQAPTKQR. Residues 447–456 are compositionally biased toward low complexity; the sequence is SLSTSSATSS.

This sequence belongs to the sorting nexin family.

The protein localises to the endosome membrane. It localises to the endomembrane system. In terms of biological role, may be required for cytoplasm to vacuole transport (Cvt) and pexophagy. In Emericella nidulans (strain FGSC A4 / ATCC 38163 / CBS 112.46 / NRRL 194 / M139) (Aspergillus nidulans), this protein is Sorting nexin-41 (snx41).